We begin with the raw amino-acid sequence, 142 residues long: Hemoglobin subunit alpha (142 aa).

Positions 2–142 (VLSAADKTNV…LSTVLTSKYR (141 aa)) constitute a Globin domain. S4 carries the phosphoserine modification. At K8 the chain carries N6-succinyllysine. T9 carries the phosphothreonine modification. Residue K12 is modified to N6-succinyllysine. At K17 the chain carries N6-acetyllysine; alternate. K17 carries the post-translational modification N6-succinyllysine; alternate. At Y25 the chain carries Phosphotyrosine. S36 is modified (phosphoserine). An N6-succinyllysine modification is found at K41. A Phosphoserine modification is found at S50. Residue Q59 participates in O2 binding. A heme b-binding site is contributed by H88. Phosphothreonine is present on T109. A Phosphoserine modification is found at S125. 2 positions are modified to phosphothreonine: T135 and T138. Residue S139 is modified to Phosphoserine.

The protein belongs to the globin family. Heterotetramer of two alpha chains and two beta chains. As to expression, red blood cells.

In terms of biological role, involved in oxygen transport from the lung to the various peripheral tissues. Hemopressin acts as an antagonist peptide of the cannabinoid receptor CNR1. Hemopressin-binding efficiently blocks cannabinoid receptor CNR1 and subsequent signaling. The polypeptide is Hemoglobin subunit alpha (HBA) (Monodelphis domestica (Gray short-tailed opossum)).